A 573-amino-acid polypeptide reads, in one-letter code: ESX-1 secretion system protein EccA1 (573 aa).

334–341 (GPPGTGKT) contributes to the ATP binding site.

The protein belongs to the CbxX/CfxQ family. In terms of assembly, part of the ESX-1 / type VII secretion system (T7SS), which is composed of cytosolic and membrane components.

The protein localises to the cytoplasm. Part of the ESX-1 specialized secretion system, which delivers several virulence factors to host cells during infection, including the key virulence factors EsxA (ESAT-6) and EsxB (CFP-10). EccA1 exhibits ATPase activity and may provide energy for the export of ESX-1 substrates. In Mycobacterium tuberculosis (strain CDC 1551 / Oshkosh), this protein is ESX-1 secretion system protein EccA1.